Reading from the N-terminus, the 1204-residue chain is Cingulin (1204 aa).

The tract at residues 7-359 is head; the sequence is MAEPRGPVDH…VMMSSGSSKA (353 aa). Positions 25–48 are disordered; the sequence is EPVSGAEMGTLRRGGRRPAKDARA. The short motif at 48-62 is the ZIM element; sequence ASTYGVAVRVQGIAG. The tract at residues 54–67 is interaction with TJP1/ZO1; it reads AVRVQGIAGQPFVV. The segment at 68-269 is disordered; it reads LNSGEKGGDS…SPLSGLSRAR (202 aa). S95, S96, S98, S135, S137, S140, S155, and S165 each carry phosphoserine. Over residues 126–140 the composition is skewed to polar residues; that stretch reads TQWNGKLLRSQSQAS. A compositionally biased stretch (polar residues) spans 166–190; that stretch reads PGSTIDTAPLSSVDSLINKFDSQLR. The segment covering 207 to 231 has biased composition (basic and acidic residues); it reads EQRKRSKSLDSRLPRDTLEERERQS. 6 positions are modified to phosphoserine: S214, S217, S260, S278, S340, and S353. A coiled-coil region spans residues 360–1161; it reads VAGQGELTRK…SLEKDSWRKA (802 aa). At K581 the chain carries N6-acetyllysine. Residues 1156–1182 form a disordered region; sequence DSWRKASRSAAESTLKHEGLSSDEEFD. Positions 1162 to 1204 are tail; that stretch reads SRSAAESTLKHEGLSSDEEFDGVYDPSSIASLLTESNLQTSSC. A phosphoserine mark is found at S1176 and S1177.

The protein belongs to the cingulin family. In terms of assembly, homodimer. Interacts with TJP1/ZO1 and SPEF1.

The protein localises to the cell junction. Its subcellular location is the tight junction. Probably plays a role in the formation and regulation of the tight junction (TJ) paracellular permeability barrier. This chain is Cingulin, found in Callithrix jacchus (White-tufted-ear marmoset).